A 187-amino-acid polypeptide reads, in one-letter code: Large ribosomal subunit protein uL5 (187 aa).

Belongs to the universal ribosomal protein uL5 family. Part of the 50S ribosomal subunit; part of the 5S rRNA/L5/L18/L25 subcomplex. Contacts the 5S rRNA and the P site tRNA. Forms a bridge to the 30S subunit in the 70S ribosome.

Its function is as follows. This is one of the proteins that bind and probably mediate the attachment of the 5S RNA into the large ribosomal subunit, where it forms part of the central protuberance. In the 70S ribosome it contacts protein S13 of the 30S subunit (bridge B1b), connecting the 2 subunits; this bridge is implicated in subunit movement. Contacts the P site tRNA; the 5S rRNA and some of its associated proteins might help stabilize positioning of ribosome-bound tRNAs. This is Large ribosomal subunit protein uL5 from Gluconobacter oxydans (strain 621H) (Gluconobacter suboxydans).